The following is a 1311-amino-acid chain: MSRRKQAKPRSLKDPNCKLEDKIEDGEAVDCKKRPEDGEELEEDAVHSCDSCLQVFESLSDITEHKIHQCQLTDGVDVEDDPSCSWPASSPSSKDQTSPSHGEGCDFGEEEGGPGLPYPCQFCDKSFSRLSYLKHHEQSHSDKLPFKCTYCSRLFKHKRSRDRHIKLHTGDKKYHCSECDAAFSRSDHLKIHLKTHTSNKPYKCAVCRRGFLSSSSLHGHMQVHERNKDGSQSGSRMEDWKMKDTQKCSQCEEGFDFPEDLQKHIAECHPECSPNEDRAALQCMYCHELFVEETSLMNHIEQVHGGEKKNSCSICSESFLTVEELYSHMDSHQQPESCNHSNSPSLVTVGYTSVSSTTPDSNLSVDSSTMVEAAPPIPKSRGRKRAAQQTSDMTGPSSKQAKVTYSCIYCNKQLFSSLAVLQIHLKTMHLDKPEQAHICQYCLEVLPSLYNLNEHLKQVHEAQDPGLIVSAMPAIVYQCNFCSEVVNDLNTLQEHIRCSHGFANPAAKDSNAFFCPHCYMGFLTDSSLEEHIRQVHCDLSGSRFGSPVLGTPKEPVVEVYSCSYCTNSPIFNSVLKLNKHIKENHKNIPLALNYIHNGKKSRALSPLSPVAIEQTTLKMMQTVGGGPARASGEYICNQCGAKYTSLDSFQTHLKTHLDTVLPKLTCPQCNKEFPNQESLLKHVTIHFMITSTYYICESCDKQFTSVDDLQKHLLDMHTFVFFRCTLCQEVFDSKVSIQLHLAVKHSNEKKVYRCTSCNWDFRNETDLQLHVKHNHLENQGKVHKCIFCGESFGTEVELQCHITTHSKKYNCRFCSKAFHAVILLEKHLREKHCVFETKTPNCGTNGASEQVQKEEAELQTLLTNSQESHNSHDGSEEDVDSSEPMYGCDICGAAYTMETLLQNHQLRDHNIRPGESAIVKKKAELIKGNYKCNVCSRTFFSENGLREHMQTHLGPVKHYMCPICGERFPSLLTLTEHKVTHSKSLDTGNCRICKMPLQSEEEFLEHCQMHPDLRNSLTGFRCVVCMQTVTSTLELKIHGTFHMQKTGNGSSVQTTGRGQHVQKLYKCASCLKEFRSKQDLVKLDINGLPYGLCAGCVNLSKSSSPGLSLPPGASRPGLGQNESLSAMEGKGKAGGLKTRCSSCNVKFESESELQNHIQTVHRELVPDANSTQLKTPQVSPMPRISPSQSDEKKTYQCIKCQMVFYNEWDIQVHVANHMIDEGLNHECKLCSQTFDSPAKLQCHLIEHSFEGMGGTFKCPVCFTVFVQANKLQQHIFSAHGQEDKIYDCTQCPQKFFFQTELQNHTMTQHSS.

The segment at 47 to 67 adopts a C2H2-type 1; degenerate zinc-finger fold; that stretch reads HSCDSCLQVFESLSDITEHKI. Residues 81-108 form a disordered region; it reads DPSCSWPASSPSSKDQTSPSHGEGCDFG. The span at 83–102 shows a compositional bias: low complexity; the sequence is SCSWPASSPSSKDQTSPSHG. 7 C2H2-type zinc fingers span residues 118-140, 146-168, 174-196, 202-224, 246-269, 281-304, and 310-332; these read YPCQ…EQSH, FKCT…IKLH, YHCS…LKTH, YKCA…MQVH, QKCS…AECH, LQCM…EQVH, and NSCS…MDSH. The segment at 357–398 is disordered; the sequence is TTPDSNLSVDSSTMVEAAPPIPKSRGRKRAAQQTSDMTGPSS. 2 stretches are compositionally biased toward polar residues: residues 359 to 370 and 387 to 398; these read PDSNLSVDSSTM and AQQTSDMTGPSS. Residues 405 to 429 form a C2H2-type 9; degenerate zinc finger; it reads YSCIYCNKQLFSSLAVLQIHLKTMH. C2H2-type zinc fingers lie at residues 437 to 460, 477 to 500, and 513 to 536; these read HICQ…KQVH, YQCN…RCSH, and FFCP…RQVH. Serine 546 carries the phosphoserine modification. The segment at 560 to 585 adopts a C2H2-type 13; atypical zinc-finger fold; sequence YSCSYCTNSPIFNSVLKLNKHIKENH. Residues serine 605 and serine 608 each carry the phosphoserine modification. C2H2-type zinc fingers lie at residues 634 to 656, 664 to 686, 694 to 717, 722 to 745, 752 to 775, 783 to 805, and 809 to 832; these read YICN…LKTH, LTCP…VTIH, YICE…LDMH, FRCT…AVKH, YRCT…KHNH, HKCI…ITTH, and YNCR…REKH. Residues 863 to 883 form a disordered region; the sequence is TNSQESHNSHDGSEEDVDSSE. The C2H2-type 21; degenerate zinc-finger motif lies at 886–908; it reads YGCDICGAAYTMETLLQNHQLRD. 3 C2H2-type zinc fingers span residues 930–952, 959–981, and 1020–1042; these read YKCN…MQTH, YMCP…KVTH, and FRCV…GTFH. The C2H2-type 25; degenerate zinc-finger motif lies at 1065–1083; the sequence is YKCASCLKEFRSKQDLVKL. The span at 1105–1119 shows a compositional bias: low complexity; that stretch reads PGLSLPPGASRPGLG. The tract at residues 1105–1136 is disordered; that stretch reads PGLSLPPGASRPGLGQNESLSAMEGKGKAGGL. 5 consecutive C2H2-type zinc fingers follow at residues 1138 to 1161, 1195 to 1217, 1225 to 1247, 1256 to 1279, and 1286 to 1309; these read TRCS…QTVH, YQCI…VANH, HECK…LIEH, FKCP…FSAH, and YDCT…MTQH. Lysine 1146 is covalently cross-linked (Glycyl lysine isopeptide (Lys-Gly) (interchain with G-Cter in SUMO2)).

The protein belongs to the krueppel C2H2-type zinc-finger protein family. Interacts with EBF1. Interacts with SMAD1 and SMAD4. In terms of tissue distribution, widely expressed. Expressed in all B-cell stages.

It is found in the nucleus. Its function is as follows. Transcription factor that can both act as an activator or a repressor depending on the context. Involved in BMP signaling and in the regulation of the immature compartment of the hematopoietic system. Associates with SMADs in response to BMP2 leading to activate transcription of BMP target genes. Acts as a transcriptional repressor via its interaction with EBF1, a transcription factor involved specification of B-cell lineage; this interaction preventing EBF1 to bind DNA and activate target genes. This is Zinc finger protein 521 (Znf521) from Mus musculus (Mouse).